We begin with the raw amino-acid sequence, 264 residues long: Thymidylate synthase (264 aa).

Arg-21 is a binding site for dUMP. A (6R)-5,10-methylene-5,6,7,8-tetrahydrofolate-binding site is contributed by His-51. Residue 126–127 (RR) coordinates dUMP. Catalysis depends on Cys-146, which acts as the Nucleophile. DUMP is bound by residues 166 to 169 (RSCD), Asn-177, and 207 to 209 (HLY). Asp-169 provides a ligand contact to (6R)-5,10-methylene-5,6,7,8-tetrahydrofolate. Residue Ala-263 coordinates (6R)-5,10-methylene-5,6,7,8-tetrahydrofolate.

This sequence belongs to the thymidylate synthase family. Bacterial-type ThyA subfamily. In terms of assembly, homodimer.

Its subcellular location is the cytoplasm. It carries out the reaction dUMP + (6R)-5,10-methylene-5,6,7,8-tetrahydrofolate = 7,8-dihydrofolate + dTMP. It participates in pyrimidine metabolism; dTTP biosynthesis. Its function is as follows. Catalyzes the reductive methylation of 2'-deoxyuridine-5'-monophosphate (dUMP) to 2'-deoxythymidine-5'-monophosphate (dTMP) while utilizing 5,10-methylenetetrahydrofolate (mTHF) as the methyl donor and reductant in the reaction, yielding dihydrofolate (DHF) as a by-product. This enzymatic reaction provides an intracellular de novo source of dTMP, an essential precursor for DNA biosynthesis. The chain is Thymidylate synthase from Klebsiella pneumoniae subsp. pneumoniae (strain ATCC 700721 / MGH 78578).